Here is a 200-residue protein sequence, read N- to C-terminus: Small ribosomal subunit protein eS8A (200 aa).

2 disordered regions span residues 1 to 40 and 123 to 145; these read MGIT…RIGP and SKGK…KHSA. The span at 135-145 shows a compositional bias: basic residues; the sequence is KSKHVQRKHSA.

This sequence belongs to the eukaryotic ribosomal protein eS8 family. As to quaternary structure, component of the small ribosomal subunit (SSU). Mature yeast ribosomes consist of a small (40S) and a large (60S) subunit. The 40S small subunit contains 1 molecule of ribosomal RNA (18S rRNA) and at least 33 different proteins. The large 60S subunit contains 3 rRNA molecules (25S, 5.8S and 5S rRNA) and at least 46 different proteins.

It localises to the cytoplasm. Its function is as follows. Component of the ribosome, a large ribonucleoprotein complex responsible for the synthesis of proteins in the cell. The small ribosomal subunit (SSU) binds messenger RNAs (mRNAs) and translates the encoded message by selecting cognate aminoacyl-transfer RNA (tRNA) molecules. The large subunit (LSU) contains the ribosomal catalytic site termed the peptidyl transferase center (PTC), which catalyzes the formation of peptide bonds, thereby polymerizing the amino acids delivered by tRNAs into a polypeptide chain. The nascent polypeptides leave the ribosome through a tunnel in the LSU and interact with protein factors that function in enzymatic processing, targeting, and the membrane insertion of nascent chains at the exit of the ribosomal tunnel. This Schizosaccharomyces pombe (strain 972 / ATCC 24843) (Fission yeast) protein is Small ribosomal subunit protein eS8A (rps801).